The chain runs to 97 residues: Co-chaperonin GroES (97 aa).

It belongs to the GroES chaperonin family. In terms of assembly, heptamer of 7 subunits arranged in a ring. Interacts with the chaperonin GroEL.

It localises to the cytoplasm. Together with the chaperonin GroEL, plays an essential role in assisting protein folding. The GroEL-GroES system forms a nano-cage that allows encapsulation of the non-native substrate proteins and provides a physical environment optimized to promote and accelerate protein folding. GroES binds to the apical surface of the GroEL ring, thereby capping the opening of the GroEL channel. The chain is Co-chaperonin GroES from Pseudomonas putida (strain W619).